Reading from the N-terminus, the 209-residue chain is Dual specificity protein phosphatase 22 (209 aa).

Residues 4 to 144 (GMNKILPSLF…LEDFGKHDVY (141 aa)) form the Tyrosine-protein phosphatase domain. The active-site Phosphocysteine intermediate is the Cys-88. The segment at 170-193 (DKHKQQEAAESQSATSSGRQWSSH) is disordered. Residues 177-193 (AAESQSATSSGRQWSSH) show a composition bias toward low complexity.

Belongs to the protein-tyrosine phosphatase family. Non-receptor class dual specificity subfamily.

It is found in the cytoplasm. Its subcellular location is the nucleus. It catalyses the reaction O-phospho-L-tyrosyl-[protein] + H2O = L-tyrosyl-[protein] + phosphate. It carries out the reaction O-phospho-L-seryl-[protein] + H2O = L-seryl-[protein] + phosphate. The enzyme catalyses O-phospho-L-threonyl-[protein] + H2O = L-threonyl-[protein] + phosphate. Functionally, activates the Jnk signaling pathway. Dephosphorylates and deactivates p38 and stress-activated protein kinase/c-Jun N-terminal kinase (SAPK/JNK). The protein is Dual specificity protein phosphatase 22 (dusp22) of Xenopus tropicalis (Western clawed frog).